We begin with the raw amino-acid sequence, 1138 residues long: Envelopment polyprotein (1138 aa).

The N-terminal stretch at 1–18 is a signal peptide; that stretch reads MEGWYLVVLGVCYTLTLA. At 19–487 the chain is on the lumenal side; that stretch reads MPKTIYELKM…CVPGLHGWAT (469 aa). 11 cysteine pairs are disulfide-bonded: C30-C155, C64-C161, C113-C132, C137-C142, C179-C189, C214-C250, C239-C354, C379-C438, C383-C392, C408-C427, and C455-C478. The N-linked (GlcNAc...) asparagine; by host glycan is linked to N138. A glycan (N-linked (GlcNAc...) asparagine; by host) is linked at N350. N402 carries N-linked (GlcNAc...) asparagine; by host glycosylation. Residues 488–508 traverse the membrane as a helical segment; sequence VMLLSTFCFGWVLIPAVTLII. Residues 509–630 lie on the Cytoplasmic side of the membrane; that stretch reads LKCLRVLTFS…LGVFRYKSRC (122 aa). The binding to the ribonucleoprotein stretch occupies residues 519–536; that stretch reads CSHYTNESKFKFILEKVK. 2 CCHC-type zinc fingers span residues 548–568 and 573–594; these read CDVC…RQSC and CPYC…YSIC. 3 binding to the ribonucleoprotein regions span residues 591–608, 595–606, and 614–628; these read YSIC…KKSL, KLTGRFQEALKK, and KKGC…RYKS. Residues 610 to 637 are interaction with host TRAF3; sequence KPEVKKGCYRTLGVFRYKSRCYVGLVWC. In terms of domain architecture, ITAM spans 614–637; sequence KKGCYRTLGVFRYKSRCYVGLVWC. Y618 and Y631 each carry phosphotyrosine. The YxxL motif lies at 618–621; the sequence is YRTL. Residues 631–651 traverse the membrane as a helical segment; it reads YVGLVWCLLLTCEIVIWAASA. Residues 652 to 1107 lie on the Lumenal side of the membrane; that stretch reads ETPLMESGWS…EWLLGILNGN (456 aa). 8 disulfides stabilise this stretch: C738–C773, C742–C780, C754–C887, C768–C898, C783–C906, C809–C818, C826–C835, and C866–C870. Residues 760 to 780 are fusion loop; that stretch reads YQYETGWGCNPGDCPGVGTGC. N-linked (GlcNAc...) asparagine; by host glycosylation occurs at N930. Disulfide bonds link C972–C1002, C995–C1047, C1012–C1017, C1048–C1053, and C1087–C1091. The chain crosses the membrane as a helical span at residues 1108–1128; sequence WIVVVVLVVILILSIIMFSVL. The segment at 1124–1138 is binding to the ribonucleoprotein; that stretch reads MFSVLCPRRGHKKTV. The Cytoplasmic segment spans residues 1129-1138; the sequence is CPRRGHKKTV.

It belongs to the hantavirus envelope glycoprotein family. As to quaternary structure, homodimer. Homotetramer; forms heterotetrameric Gn-Gc spikes in the pre-fusion conformation. Interacts (via C-terminus) with the nucleoprotein. Interacts with host TUFM; this interaction contributes to the virus-induced degradation of mitochondria by autophagy, which leads to degradation of host MAVS and inhibition of type I interferon (IFN) responses. Interacts with host MAP1LC3B; this interaction contributes to the virus-induced degradation of mitochondria by autophagy, which leads to degradation of host MAVS and inhibition of type I interferon (IFN) responses. Interacts (via C-terminus) with host TRAF3; this interaction inhibits the formation of TRAF3-TBK1 complexes. In terms of assembly, homodimer. Homotetramer; forms heterotetrameric Gn-Gc spikes in the pre-fusion conformation. Homotrimer; forms homotrimer in the post-fusion conformation at acidic pH. Interacts (via C-terminus) with the nucleoprotein. Envelope polyprotein precursor is quickly cleaved in vivo just after synthesis, presumably by host signal peptidase.

It is found in the virion membrane. The protein localises to the host cell surface. It localises to the host Golgi apparatus membrane. Its subcellular location is the host endoplasmic reticulum membrane. The protein resides in the host mitochondrion. Functionally, forms homotetramers with glycoprotein C at the surface of the virion. Attaches the virion to host cell receptors including integrin ITGAV/ITGB3. This attachment induces virion internalization possibly through clathrin-dependent endocytosis and dynamin-independent macropinocytosis. Mediates the assembly and budding of infectious virus particles through its interaction with the nucleocapsid protein and the viral genome. May dysregulate normal immune and endothelial cell responses through an ITAM motif. Translocates to mitochondria, binds to host TUFM and recruits MAP1LC3B. These interactions induce mitochondrial autophagy and therefore destruction of host MAVS leading to inhibition of type I interferon (IFN) responses. Concomitant breakdown of glycoprotein N is apparently prevented by the nucleoprotein that may inhibit Gn-stimulated autophagosome-lysosome fusion. Interacts with the viral genomic RNA. Inhibits the host RIG-I/TBK1 pathway by disrupting the formation of TBK1-TRAF3 complexes and downstream signaling responses required for IFN-beta transcription. Its function is as follows. Forms homotetramers with glycoprotein N at the surface of the virion. Attaches the virion to host cell receptors including integrin ITGAV/ITGB3. This attachment induces virion internalization predominantly through clathrin-dependent endocytosis. Class II fusion protein that promotes fusion of viral membrane with host endosomal membrane after endocytosis of the virion. This chain is Envelopment polyprotein (GP), found in Abrothrix longipilis (Long-haired grass mouse).